We begin with the raw amino-acid sequence, 542 residues long: Esterase S (542 aa).

An N-terminal signal peptide occupies residues 1–22 (MTQILLPIALLCLFAASTLSNP). An intrachain disulfide couples C81 to C100. Residue N110 is glycosylated (N-linked (GlcNAc...) asparagine). The Acyl-ester intermediate role is filled by S204. C256 and C268 form a disulfide bridge. N396 carries an N-linked (GlcNAc...) asparagine glycan. C507 and C528 are joined by a disulfide.

The protein belongs to the type-B carboxylesterase/lipase family. Monomer. Specifically expressed in the ejaculatory bulbs of male.

The protein resides in the secreted. The catalysed reaction is a carboxylic ester + H2O = an alcohol + a carboxylate + H(+). Functionally, transferred from the ejaculatory bulbs of males to the female genitals upon copulation, plays an important role in the reproductive biology. This is Esterase S (EstS) from Drosophila virilis (Fruit fly).